We begin with the raw amino-acid sequence, 350 residues long: MASVSLLSALAVRLLRPTHGCHPRLQPFHLAAVRNEAVVISGRKLAQQIKQEVQQEVEEWVASGNKRPHLSVILVGDNPASHSYVLNKTRAAAEVGINSETIVKPASVSEEELLNSIRKLNNDENVDGLLVQLPLPEHIDERKVCNAVSPDKDVDGFHVINVGRMCLDQYSMLPATPWGVWEIIKRTGIPTLGKNVVVAGRSKNVGMPIAMLLHTDGAHERPGGDATVTISHRYTPKEQLKKHTILADIVISAAGIPNLITADMIKEGAAVIDVGINRVQDPVTAKPKLVGDVDFEGVKKKAGYITPVPGGVGPMTVAMLMKNTIIAAKKVLRPEELEVFKSKQRGVATN.

Residues 1–35 constitute a mitochondrion transit peptide; that stretch reads MASVSLLSALAVRLLRPTHGCHPRLQPFHLAAVRN. The residue at position 50 (K50) is an N6-acetyllysine; alternate. A Glycyl lysine isopeptide (Lys-Gly) (interchain with G-Cter in SUMO2); alternate cross-link involves residue K50. Substrate contacts are provided by residues 84–88 and 131–133; these read YVLNK and VQL. NAD(+)-binding positions include 200–202 and R233; that span reads GRS. 309–313 serves as a coordination point for substrate; the sequence is PGGVG.

This sequence belongs to the tetrahydrofolate dehydrogenase/cyclohydrolase family. Homodimer. The cofactor is Mg(2+).

The protein localises to the mitochondrion. The enzyme catalyses (6R)-5,10-methylene-5,6,7,8-tetrahydrofolate + NAD(+) = (6R)-5,10-methenyltetrahydrofolate + NADH. It catalyses the reaction (6R)-5,10-methenyltetrahydrofolate + H2O = (6R)-10-formyltetrahydrofolate + H(+). Functionally, although its dehydrogenase activity is NAD-specific, it can also utilize NADP at a reduced efficiency. The polypeptide is Bifunctional methylenetetrahydrofolate dehydrogenase/cyclohydrolase, mitochondrial (Mthfd2) (Mus musculus (Mouse)).